The following is a 368-amino-acid chain: D-alanine--D-alanine ligase (368 aa).

In terms of domain architecture, ATP-grasp spans 145 to 348 (KRLLQGAGLH…YQDLITTLIE (204 aa)). An ATP-binding site is contributed by 175-230 (ADQLGLPLFIKPANQGSSVGVNKATTEAEFTAAIEEAFSYDHKVLIEAAIKGREIE). The Mg(2+) site is built by Asp-302, Glu-315, and Asn-317.

It belongs to the D-alanine--D-alanine ligase family. It depends on Mg(2+) as a cofactor. Mn(2+) serves as cofactor.

It localises to the cytoplasm. The enzyme catalyses 2 D-alanine + ATP = D-alanyl-D-alanine + ADP + phosphate + H(+). Its pathway is cell wall biogenesis; peptidoglycan biosynthesis. Functionally, cell wall formation. The polypeptide is D-alanine--D-alanine ligase (Shouchella clausii (strain KSM-K16) (Alkalihalobacillus clausii)).